We begin with the raw amino-acid sequence, 1492 residues long: DNA polymerase alpha catalytic subunit (1492 aa).

Disordered stretches follow at residues 34 to 112, 162 to 195, and 210 to 234; these read DFIV…VEQS, SVTL…DVNP, and ANSY…EMAN. Over residues 42–55 the composition is skewed to basic and acidic residues; sequence YGYRDHGGEIWDRD. The span at 93 to 105 shows a compositional bias: polar residues; the sequence is NAASTNPSAQQKP. Over residues 166–178 the composition is skewed to basic and acidic residues; the sequence is ESREEQERRRQSE. 2 stretches are compositionally biased toward polar residues: residues 184-194 and 210-224; these read ANIGQNQSDVN and ANSY…SVSK. Residues Cys1314, Cys1317, Cys1341, Cys1344, Cys1375, Cys1380, Cys1393, and Cys1398 each contribute to the Zn(2+) site. The CysA-type zinc-finger motif lies at 1314–1344; the sequence is CPHCAHNYHFPGILVPSSNNTELTGLACVKC. A CysB motif motif is present at residues 1375-1398; that stretch reads CKEPQCGMKTNQLLLNNKCIVKGC.

Belongs to the DNA polymerase type-B family.

The protein resides in the nucleus. It carries out the reaction DNA(n) + a 2'-deoxyribonucleoside 5'-triphosphate = DNA(n+1) + diphosphate. Functionally, polymerase alpha in a complex with DNA primase is a replicative polymerase. This Sterkiella nova (Ciliate) protein is DNA polymerase alpha catalytic subunit.